The primary structure comprises 1366 residues: Protein strawberry notch homolog 2 (1366 aa).

4 disordered regions span residues 1–24, 174–217, 614–640, and 1324–1366; these read MLAV…GSLL, QEQS…KQHP, STKR…KAPR, and HAGP…QAPL. The span at 15 to 24 shows a compositional bias: pro residues; it reads HEPPPAGSLL. Acidic residues predominate over residues 182–194; that stretch reads PEEEDEAEEEEAE. A compositionally biased stretch (basic residues) spans 614 to 637; sequence STKRKRDRGAGSKRKRRPRGRGAK. The segment covering 1333–1347 has biased composition (gly residues); it reads LGEGAGAGGAAGGGP.

It belongs to the SBNO family. In terms of assembly, interacts with TAL1; this interaction inhibits TAL1 occupancy of the DCSTAMP promoter, leading to the activation of the DCSTAMP promoter by the transcription factor MITF. As to expression, detected in macrophages. IL10 regulates expression in a STAT3-dependent way.

Functionally, acts as a transcriptional coregulator, that can have both coactivator and corepressor functions. Inhibits the DCSTAMP-repressive activity of TAL1, hence enhancing the access of the transcription factor MITF to the DC-STAMP promoter in osteoclast. Plays a role in bone homeostasis; required as a positive regulator in TNFSF11//RANKL-mediated osteoclast fusion via a DCSTAMP-dependent pathway. May also be required in the regulation of osteoblast differentiation. Involved in the transcriptional corepression of NF-kappaB in macrophages. Plays a role as a regulator in the pro-inflammatory cascade. The chain is Protein strawberry notch homolog 2 (SBNO2) from Homo sapiens (Human).